Consider the following 569-residue polypeptide: Paxillin-B (569 aa).

Residues Asp-10–Leu-18 carry the LD motif 1 motif. Residues Gln-62 to Asn-78 show a composition bias toward polar residues. The disordered stretch occupies residues Gln-62–Ile-103. The segment covering Thr-79–Gln-102 has biased composition (low complexity). The LD motif 2 signature appears at Leu-106 to Leu-112. Positions Thr-129–Leu-311 are disordered. Low complexity predominate over residues Asn-150 to Ser-161. 2 stretches are compositionally biased toward polar residues: residues Arg-162 to Lys-188 and Thr-196 to Tyr-206. Residues Ser-207–Pro-217 are compositionally biased toward low complexity. An LD motif 3 motif is present at residues Leu-232–Leu-239. Basic residues predominate over residues His-258–Pro-272. The span at Asn-273 to Asn-301 shows a compositional bias: low complexity. The LD motif 4 signature appears at Leu-311–Leu-318. LIM zinc-binding domains are found at residues Gly-334–Phe-391, Ala-393–Val-452, Arg-453–Gly-510, and Ser-511–Ala-569.

The protein belongs to the paxillin family. As to expression, expressed in the upper and lower cup of the fruiting body.

It localises to the cytoplasm. The protein localises to the cell cortex. It is found in the cell projection. Its subcellular location is the filopodium. The protein resides in the cell junction. It localises to the focal adhesion. The protein localises to the cytoskeleton. Functionally, required for cell-substrate adhesion, cell sorting, slug migration, and cell differentiation. May function upstream of limB. This Dictyostelium discoideum (Social amoeba) protein is Paxillin-B (paxB).